Here is a 515-residue protein sequence, read N- to C-terminus: Cytochrome P450 76C3 (515 aa).

Residues 5-25 (LIQGMSLPLYFLLTLFFFFFA) traverse the membrane as a helical segment. Cys-451 provides a ligand contact to heme.

Belongs to the cytochrome P450 family. Requires heme as cofactor.

Its subcellular location is the membrane. This is Cytochrome P450 76C3 (CYP76C3) from Arabidopsis thaliana (Mouse-ear cress).